The sequence spans 208 residues: Outer-membrane lipoprotein carrier protein (208 aa).

A signal peptide spans 1 to 22 (MKKRLCAVLLASPLLFSAAVFA).

It belongs to the LolA family. In terms of assembly, monomer.

It localises to the periplasm. Its function is as follows. Participates in the translocation of lipoproteins from the inner membrane to the outer membrane. Only forms a complex with a lipoprotein if the residue after the N-terminal Cys is not an aspartate (The Asp acts as a targeting signal to indicate that the lipoprotein should stay in the inner membrane). The chain is Outer-membrane lipoprotein carrier protein from Shewanella baltica (strain OS223).